The primary structure comprises 119 residues: Putative mating-type protein A2 (119 aa).

The segment at residues 38 to 100 (KPYRGHRFTK…NRRRKEKTIT (63 aa)) is a DNA-binding region (homeobox; TALE-type).

It belongs to the TALE/M-ATYP homeobox family.

It is found in the nucleus. In terms of biological role, probably not a functional protein. Cells lacking A2 show no obvious alterations in mating, sporulation and cell growth. The sequence is that of Putative mating-type protein A2 (MATA2) from Saccharomyces cerevisiae (Baker's yeast).